The chain runs to 310 residues: Homoserine kinase (310 aa).

Position 91–101 (Pro-91–Cys-101) interacts with ATP.

This sequence belongs to the GHMP kinase family. Homoserine kinase subfamily.

The protein localises to the cytoplasm. The enzyme catalyses L-homoserine + ATP = O-phospho-L-homoserine + ADP + H(+). It participates in amino-acid biosynthesis; L-threonine biosynthesis; L-threonine from L-aspartate: step 4/5. In terms of biological role, catalyzes the ATP-dependent phosphorylation of L-homoserine to L-homoserine phosphate. This is Homoserine kinase from Escherichia coli O6:K15:H31 (strain 536 / UPEC).